The primary structure comprises 145 residues: UPF0179 protein Maeo_1037 (145 aa).

Belongs to the UPF0179 family.

This Methanococcus aeolicus (strain ATCC BAA-1280 / DSM 17508 / OCM 812 / Nankai-3) protein is UPF0179 protein Maeo_1037.